The chain runs to 374 residues: Ferroptosis suppressor protein 1 (374 aa).

A lipid anchor (N-myristoyl glycine) is attached at Gly-2. Residues 13–35 (VVIVGGGFAGIAAATQLKSFGIP) traverse the membrane as a helical segment. Residues 17–21 (GGGFA), Arg-53, and Val-81 contribute to the 6-hydroxy-FAD site. Lys-167 is modified (N6-acetyllysine). Asp-285 contributes to the 6-hydroxy-FAD binding site.

The protein belongs to the FAD-dependent oxidoreductase family. Requires 6-hydroxy-FAD as cofactor. N-myristoylation at Gly-2 mediates the recruitment to lipid droplets and plasma membrane. In terms of processing, acetylation at Lys-167 prevents AIFM2 ubiquitination and degradation, thereby inhibiting ferroptosis. KAT2B mediates acetylation at Lys-167, while HDAC3 removes it. Post-translationally, ubiquitinated. AIFM2 undergoes 'Lys-29'-ubiquitination and proteasomal degradation, which is inhibited by acetylation at Lys-167.

It localises to the lipid droplet. The protein localises to the cell membrane. The protein resides in the cytoplasm. Its subcellular location is the mitochondrion membrane. It is found in the nucleus. It carries out the reaction ubiquinone-10 + NADH + H(+) = ubiquinol-10 + NAD(+). The catalysed reaction is phylloquinone + NADH + H(+) = phylloquinol + NAD(+). The enzyme catalyses menaquinone-4 + NADH + H(+) = menaquinol-4 + NAD(+). It catalyses the reaction menadione + NADH + H(+) = menadiol + NAD(+). Its activity is regulated as follows. The modification by 4-hydroxy-2-nonenal (HNE) adduction in mitochondria results in loss of the oxidoreductase activity and activation of a novel function in mitochondrial oxidative stress signaling. Functionally, a NAD(P)H-dependent oxidoreductase that acts as a key inhibitor of ferroptosis. At the plasma membrane, catalyzes reduction of coenzyme Q/ubiquinone-10 to ubiquinol-10, a lipophilic radical-trapping antioxidant that prevents lipid oxidative damage and consequently ferroptosis. Acts in parallel to GPX4 to suppress phospholipid peroxidation and ferroptosis. This anti-ferroptotic function is independent of cellular glutathione levels. Also acts as a potent radical-trapping antioxidant by mediating warfarin-resistant vitamin K reduction in the canonical vitamin K cycle: catalyzes NAD(P)H-dependent reduction of vitamin K (phylloquinone, menaquinone-4 and menadione) to hydroquinone forms. Hydroquinones act as potent radical-trapping antioxidants inhibitor of phospholipid peroxidation and ferroptosis. May play a role in mitochondrial stress signaling. Upon oxidative stress, associates with the lipid peroxidation end product 4-hydroxy-2-nonenal (HNE) forming a lipid adduct devoid of oxidoreductase activity, which then translocates from mitochondria into the nucleus triggering DNA damage and cell death. The polypeptide is Ferroptosis suppressor protein 1 (aifm2) (Xenopus tropicalis (Western clawed frog)).